Here is a 284-residue protein sequence, read N- to C-terminus: NAD kinase (284 aa).

Residue aspartate 65 is the Proton acceptor of the active site. NAD(+) is bound by residues 65–66 (DG), 139–140 (ND), arginine 150, arginine 167, aspartate 169, and glutamine 239.

The protein belongs to the NAD kinase family. Requires a divalent metal cation as cofactor.

It is found in the cytoplasm. It carries out the reaction NAD(+) + ATP = ADP + NADP(+) + H(+). In terms of biological role, involved in the regulation of the intracellular balance of NAD and NADP, and is a key enzyme in the biosynthesis of NADP. Catalyzes specifically the phosphorylation on 2'-hydroxyl of the adenosine moiety of NAD to yield NADP. This chain is NAD kinase, found in Desulfatibacillum aliphaticivorans.